The following is a 482-amino-acid chain: tRNA sulfurtransferase (482 aa).

One can recognise a THUMP domain in the interval 61–165 (LAIRDALTRI…DDRLLLIKGR (105 aa)). Residues 183-184 (LI), Lys265, Gly287, and Gln296 each bind ATP. A disulfide bridge connects residues Cys344 and Cys456. The Rhodanese domain occupies 404–482 (FGPNDVILDI…GFNNVKVYRP (79 aa)). The active-site Cysteine persulfide intermediate is the Cys456.

This sequence belongs to the ThiI family.

The protein resides in the cytoplasm. It catalyses the reaction [ThiI sulfur-carrier protein]-S-sulfanyl-L-cysteine + a uridine in tRNA + 2 reduced [2Fe-2S]-[ferredoxin] + ATP + H(+) = [ThiI sulfur-carrier protein]-L-cysteine + a 4-thiouridine in tRNA + 2 oxidized [2Fe-2S]-[ferredoxin] + AMP + diphosphate. It carries out the reaction [ThiS sulfur-carrier protein]-C-terminal Gly-Gly-AMP + S-sulfanyl-L-cysteinyl-[cysteine desulfurase] + AH2 = [ThiS sulfur-carrier protein]-C-terminal-Gly-aminoethanethioate + L-cysteinyl-[cysteine desulfurase] + A + AMP + 2 H(+). It participates in cofactor biosynthesis; thiamine diphosphate biosynthesis. Functionally, catalyzes the ATP-dependent transfer of a sulfur to tRNA to produce 4-thiouridine in position 8 of tRNAs, which functions as a near-UV photosensor. Also catalyzes the transfer of sulfur to the sulfur carrier protein ThiS, forming ThiS-thiocarboxylate. This is a step in the synthesis of thiazole, in the thiamine biosynthesis pathway. The sulfur is donated as persulfide by IscS. The chain is tRNA sulfurtransferase from Escherichia coli (strain ATCC 8739 / DSM 1576 / NBRC 3972 / NCIMB 8545 / WDCM 00012 / Crooks).